Consider the following 668-residue polypeptide: Ecdysone oxidase (668 aa).

Residues 137–140 (NHMV), V270, and 536–537 (WH) contribute to the FAD site. The active-site Proton acceptor is H537.

This sequence belongs to the GMC oxidoreductase family. FAD is required as a cofactor.

It catalyses the reaction ecdysone + O2 = 3-dehydroecdysone + H2O2. In terms of biological role, involved in the inactivation of ecdysteroid molting hormones by converting ecdysteroids into 3-dehydroecdysteroids. In Bombyx mori (Silk moth), this protein is Ecdysone oxidase.